We begin with the raw amino-acid sequence, 399 residues long: Zinc finger TRAF-type-containing protein 1 (399 aa).

The segment covering 1–13 (MSGAEEAGGGGPA) has biased composition (gly residues). The interval 1 to 20 (MSGAEEAGGGGPAAGPAGAV) is disordered. Residues 106–151 (CTVCLDLPKASVYQCTNGHLMCAGCFIHLLADARLKEEQATCPNCR) form an RING-type; degenerate zinc finger. A TRAF-type zinc finger spans residues 152 to 210 (CEISKSLCCRNLAVEKAVSELPSECGFCLRQFPRSLLERHQKEECQDRVTQCKYKRIGC).

It belongs to the ZFTRAF1 family. As to quaternary structure, interacts with LGALS3.

The protein resides in the cytoplasm. It localises to the perinuclear region. The polypeptide is Zinc finger TRAF-type-containing protein 1 (Rattus norvegicus (Rat)).